Here is a 268-residue protein sequence, read N- to C-terminus: 3-deoxy-manno-octulosonate cytidylyltransferase (268 aa).

The protein belongs to the KdsB family.

Its subcellular location is the cytoplasm. The catalysed reaction is 3-deoxy-alpha-D-manno-oct-2-ulosonate + CTP = CMP-3-deoxy-beta-D-manno-octulosonate + diphosphate. The protein operates within nucleotide-sugar biosynthesis; CMP-3-deoxy-D-manno-octulosonate biosynthesis; CMP-3-deoxy-D-manno-octulosonate from 3-deoxy-D-manno-octulosonate and CTP: step 1/1. Its pathway is bacterial outer membrane biogenesis; lipopolysaccharide biosynthesis. Its function is as follows. Activates KDO (a required 8-carbon sugar) for incorporation into bacterial lipopolysaccharide in Gram-negative bacteria. The sequence is that of 3-deoxy-manno-octulosonate cytidylyltransferase from Psychrobacter arcticus (strain DSM 17307 / VKM B-2377 / 273-4).